We begin with the raw amino-acid sequence, 164 residues long: FMN reductase (NADH) RutF (164 aa).

It belongs to the non-flavoprotein flavin reductase family. RutF subfamily.

The enzyme catalyses FMNH2 + NAD(+) = FMN + NADH + 2 H(+). Catalyzes the reduction of FMN to FMNH2 which is used to reduce pyrimidine by RutA via the Rut pathway. This is FMN reductase (NADH) RutF from Escherichia coli O127:H6 (strain E2348/69 / EPEC).